Here is a 430-residue protein sequence, read N- to C-terminus: Enolase (430 aa).

Q163 lines the (2R)-2-phosphoglycerate pocket. The active-site Proton donor is E205. Positions 242, 287, and 314 each coordinate Mg(2+). (2R)-2-phosphoglycerate is bound by residues K339, R368, S369, and K390. K339 acts as the Proton acceptor in catalysis.

The protein belongs to the enolase family. Mg(2+) is required as a cofactor.

The protein resides in the cytoplasm. Its subcellular location is the secreted. The protein localises to the cell surface. The catalysed reaction is (2R)-2-phosphoglycerate = phosphoenolpyruvate + H2O. It participates in carbohydrate degradation; glycolysis; pyruvate from D-glyceraldehyde 3-phosphate: step 4/5. In terms of biological role, catalyzes the reversible conversion of 2-phosphoglycerate (2-PG) into phosphoenolpyruvate (PEP). It is essential for the degradation of carbohydrates via glycolysis. The chain is Enolase from Geobacillus sp. (strain WCH70).